A 345-amino-acid polypeptide reads, in one-letter code: Biotin synthase (345 aa).

One can recognise a Radical SAM core domain in the interval 39–266; the sequence is NEVQVSTLLS…ASHVRLSAGR (228 aa). Residues C54, C58, and C61 each coordinate [4Fe-4S] cluster. Residues C98, C129, C189, and R261 each coordinate [2Fe-2S] cluster.

The protein belongs to the radical SAM superfamily. Biotin synthase family. In terms of assembly, homodimer. Requires [4Fe-4S] cluster as cofactor. [2Fe-2S] cluster is required as a cofactor.

It catalyses the reaction (4R,5S)-dethiobiotin + (sulfur carrier)-SH + 2 reduced [2Fe-2S]-[ferredoxin] + 2 S-adenosyl-L-methionine = (sulfur carrier)-H + biotin + 2 5'-deoxyadenosine + 2 L-methionine + 2 oxidized [2Fe-2S]-[ferredoxin]. Its pathway is cofactor biosynthesis; biotin biosynthesis; biotin from 7,8-diaminononanoate: step 2/2. Its function is as follows. Catalyzes the conversion of dethiobiotin (DTB) to biotin by the insertion of a sulfur atom into dethiobiotin via a radical-based mechanism. This is Biotin synthase from Idiomarina loihiensis (strain ATCC BAA-735 / DSM 15497 / L2-TR).